We begin with the raw amino-acid sequence, 121 residues long: MANPTQIYSRDVKWRKGVMRTLVSELFANGRITTTLTRAKELRRHAEKLITKAKNPTLANRRICASFLRPTLVEEGKKDVLKHLFDTIAPSYAKRNGGYTRIYKLVNRQGDNAPMAIIELV.

Belongs to the bacterial ribosomal protein bL17 family. In terms of assembly, part of the 50S ribosomal subunit. Contacts protein L32.

The sequence is that of Large ribosomal subunit protein bL17 from Mycoplasmopsis agalactiae (strain NCTC 10123 / CIP 59.7 / PG2) (Mycoplasma agalactiae).